A 125-amino-acid polypeptide reads, in one-letter code: Fluoride-specific ion channel FluC (125 aa).

4 helical membrane-spanning segments follow: residues 6–26 (GFIA…SGLV), 34–54 (FPWG…LVWE), 68–88 (AVLL…IFES), and 98–118 (LALL…LFAG). G76 and T79 together coordinate Na(+).

It belongs to the fluoride channel Fluc/FEX (TC 1.A.43) family.

It is found in the cell inner membrane. The enzyme catalyses fluoride(in) = fluoride(out). With respect to regulation, na(+) is not transported, but it plays an essential structural role and its presence is essential for fluoride channel function. In terms of biological role, fluoride-specific ion channel. Important for reducing fluoride concentration in the cell, thus reducing its toxicity. The chain is Fluoride-specific ion channel FluC from Solidesulfovibrio magneticus (strain ATCC 700980 / DSM 13731 / RS-1) (Desulfovibrio magneticus).